The sequence spans 354 residues: 5,10-methenyltetrahydromethanopterin hydrogenase (354 aa).

Belongs to the HMD family.

The enzyme catalyses 5,10-methenyl-5,6,7,8-tetrahydromethanopterin + H2 = 5,10-methylenetetrahydromethanopterin + H(+). Its pathway is one-carbon metabolism; methanogenesis from CO(2); 5,10-methylene-5,6,7,8-tetrahydromethanopterin from 5,10-methenyl-5,6,7,8-tetrahydromethanopterin (hydrogen route): step 1/1. Catalyzes the reversible reduction of methenyl-H(4)MPT(+) to methylene-H(4)MPT. The polypeptide is 5,10-methenyltetrahydromethanopterin hydrogenase (Methanococcus vannielii (strain ATCC 35089 / DSM 1224 / JCM 13029 / OCM 148 / SB)).